Reading from the N-terminus, the 132-residue chain is Small ribosomal subunit protein uS8 (132 aa).

This sequence belongs to the universal ribosomal protein uS8 family. Part of the 30S ribosomal subunit. Contacts proteins S5 and S12.

Its function is as follows. One of the primary rRNA binding proteins, it binds directly to 16S rRNA central domain where it helps coordinate assembly of the platform of the 30S subunit. This Borreliella burgdorferi (strain ZS7) (Borrelia burgdorferi) protein is Small ribosomal subunit protein uS8.